The sequence spans 213 residues: Pyrrolidone-carboxylate peptidase (213 aa).

Active-site residues include Glu-78, Cys-141, and His-165.

This sequence belongs to the peptidase C15 family. As to quaternary structure, homotetramer.

It is found in the cytoplasm. It catalyses the reaction Release of an N-terminal pyroglutamyl group from a polypeptide, the second amino acid generally not being Pro.. In terms of biological role, removes 5-oxoproline from various penultimate amino acid residues except L-proline. The chain is Pyrrolidone-carboxylate peptidase from Alkaliphilus oremlandii (strain OhILAs) (Clostridium oremlandii (strain OhILAs)).